The primary structure comprises 248 residues: Probable transcriptional regulatory protein Noc_0137 (248 aa).

Belongs to the TACO1 family.

Its subcellular location is the cytoplasm. This is Probable transcriptional regulatory protein Noc_0137 from Nitrosococcus oceani (strain ATCC 19707 / BCRC 17464 / JCM 30415 / NCIMB 11848 / C-107).